The sequence spans 229 residues: Aldehyde oxidoreductase iron-sulfur-binding subunit PaoA (229 aa).

Positions 1–21 (MSNQGEYPEDNRVGKHEPHDL) are disordered. A signal peptide (tat-type signal) is located at residues 1-53 (MSNQGEYPEDNRVGKHEPHDLSLTRRDLIKVSAATAATAVVYPHSTLAASVPA). Residues 9-21 (EDNRVGKHEPHDL) show a composition bias toward basic and acidic residues. Residues 61 to 137 (MPLTLKVNGK…GAEITTIEGL (77 aa)) enclose the 2Fe-2S ferredoxin-type domain. The [2Fe-2S] cluster site is built by Cys99, Cys104, Gly105, Cys107, Cys119, Cys158, Cys161, Cys208, and Cys210.

As to quaternary structure, heterotrimer composed of PaoA, PaoB and PaoC. The cofactor is [2Fe-2S] cluster. Exported by the Tat system. The position of the signal peptide cleavage has not been experimentally proven.

The protein resides in the periplasm. It carries out the reaction an aldehyde + A + H2O = a carboxylate + AH2 + H(+). The complex requires PaoD for activity. Functionally, oxidizes aldehydes to the corresponding carboxylic acids with a preference for aromatic aldehydes. It might play a role in the detoxification of aldehydes to avoid cell damage. In Escherichia coli (strain K12), this protein is Aldehyde oxidoreductase iron-sulfur-binding subunit PaoA.